We begin with the raw amino-acid sequence, 403 residues long: Blue light- and temperature-regulated antirepressor BluF (403 aa).

In terms of domain architecture, BLUF spans 2–93; it reads LTTLIYRSHI…ARRFGKAGME (92 aa). A joining helix region spans residues 98–144; sequence RLHERDDVLQAVFDKGTSKFQLTYDDRALQFFRTFVLATEQSTYFEI. The region spanning 155–403 is the EAL domain; the sequence is DGSDKELDSC…IPSIAWPEKK (249 aa).

Monomer, it undergoes transient dimerization following photoexcitation or upon temperature reduction, with a relaxation time of about 2 minutes. The dimer may be the inactive state. Interacts with the N- and C-terminal domains of BluR. Can also interact with the C-terminal domain of MlrA. FAD serves as cofactor.

Its function is as follows. Binds to and releases the BluR repressor from its bound DNA target in a blue light-dependent (470 nm) fashion. A shift to low temperature also triggers a BluF-mediated relief of repression by BluR, suggesting BluF may serve as a thermometer. Blue light may act to increase the affinity of BluF for BluR, allowing it to be released from its operator. The protein has a reversible photocycle, and undergoes structural changes, probably in the EAL domain, in response to light. This is Blue light- and temperature-regulated antirepressor BluF from Escherichia coli (strain K12).